The following is a 356-amino-acid chain: HORMA domain-containing protein 1 (356 aa).

One can recognise an HORMA domain in the interval 24–225 (QQSLVLVKKL…TPFHSIKMNV (202 aa)). Disordered stretches follow at residues 282-305 (ETQETQEQPHRHTKEDFSTNPKMD) and 333-356 (QLEFPLSQDPQPSVPKRRKVSVPK). Positions 288 to 298 (EQPHRHTKEDF) are enriched in basic and acidic residues. The span at 347-356 (PKRRKVSVPK) shows a compositional bias: basic residues.

The protein resides in the nucleus. The protein localises to the chromosome. In terms of biological role, plays a key role in meiotic progression by ensuring that sufficient numbers of processed DNA double-strand breaks (DSBs) are available for successful homology search, promoting synaptonemal-complex formation independently and playing key role in the male mid-pachytene checkpoint and the female meiotic prophase checkpoint. The chain is HORMA domain-containing protein 1 (hormad1) from Danio rerio (Zebrafish).